A 446-amino-acid chain; its full sequence is Na(+)-translocating NADH-quinone reductase subunit A (446 aa).

This sequence belongs to the NqrA family. In terms of assembly, composed of six subunits; NqrA, NqrB, NqrC, NqrD, NqrE and NqrF.

It carries out the reaction a ubiquinone + n Na(+)(in) + NADH + H(+) = a ubiquinol + n Na(+)(out) + NAD(+). Functionally, NQR complex catalyzes the reduction of ubiquinone-1 to ubiquinol by two successive reactions, coupled with the transport of Na(+) ions from the cytoplasm to the periplasm. NqrA to NqrE are probably involved in the second step, the conversion of ubisemiquinone to ubiquinol. The chain is Na(+)-translocating NADH-quinone reductase subunit A from Vibrio vulnificus (strain CMCP6).